The sequence spans 338 residues: Protein FosB (338 aa).

Disordered regions lie at residues 1–54 (MFQA…PGSF), 79–191 (MAQS…DQLE), 222–276 (CKIP…PPNL), and 316–338 (GAQRTSGSDQPSDPLNSPSLLAL). Composition is skewed to polar residues over residues 13–31 (SRCSSSPSAESQYLSSVDS) and 79–88 (MAQSQGQPLA). At S27 the chain carries Phosphoserine. The span at 113-124 (SSGGASGSGGPS) shows a compositional bias: gly residues. A compositionally biased stretch (low complexity) spans 125–137 (TSGTTSGPGPARP). Residues 155 to 218 (EEKRRVRRER…ERLEFVLVAH (64 aa)) enclose the bZIP domain. The interval 157 to 182 (KRRVRRERNKLAAAKCRNRRRELTDR) is basic motif. A leucine-zipper region spans residues 183-211 (LQAETDQLEEEKAELESEIAELQKEKERL). Residues 256 to 265 (LPPPPPPPLP) show a composition bias toward pro residues. Composition is skewed to polar residues over residues 266–276 (FQTSQDAPPNL) and 318–338 (QRTSGSDQPSDPLNSPSLLAL).

The protein belongs to the bZIP family. Fos subfamily. In terms of assembly, heterodimer; binds to DNA as heterodimer. Component of an AP-1 transcription factor complex; composed of FOS-JUN heterodimers. As part of the AP-1 transcription factor complex, forms heterodimers with JUN, JUNB or JUND, thereby binding to the AP-1 consensus sequence and stimulating transcription. Interacts with the BAF multiprotein chromatin-remodeling complex subunits SMARCB1 and SMARCD1. Interacts with ARID1A and JUN. Homodimer under oxidizing conditions and monomer under reducing conditions (in vitro). Heterodimer; binds to DNA as heterodimer. Forms heterodimers with JUNB, JUN or JUND; thereby binding to the AP-1 consensus sequence but does not stimulate transcription. Forms heterodimers with JUND under oxidizing conditions. In terms of processing, phosphorylated. Post-translationally, phosphorylated at Ser-27 by CSNK2A1; phosphorylation increases protein stability and transactivation potential. In terms of tissue distribution, expressed in the nucleus accumbens of the striatum (at protein level).

The protein resides in the nucleus. Its function is as follows. Heterodimerizes with proteins of the JUN family to form an AP-1 transcription factor complex, thereby enhancing their DNA binding activity to gene promoters containing an AP-1 consensus sequence 5'-TGA[GC]TCA-3' and enhancing their transcriptional activity. As part of the AP-1 complex, facilitates enhancer selection together with cell-type-specific transcription factors by collaboratively binding to nucleosomal enhancers and recruiting the SWI/SNF (BAF) chromatin remodeling complex to establish accessible chromatin. Together with JUN, plays a role in activation-induced cell death of T cells by binding to the AP-1 promoter site of FASLG/CD95L, and inducing its transcription in response to activation of the TCR/CD3 signaling pathway. Exhibits transactivation activity in vitro. Involved in the display of nurturing behavior towards newborns. May play a role in neurogenesis in the hippocampus and in learning and memory-related tasks by regulating the expression of various genes involved in neurogenesis, depression and epilepsy. Implicated in behavioral responses related to morphine reward and spatial memory. Exhibits lower transactivation activity than isoform 1 in vitro. The heterodimer with JUN does not display any transcriptional activity, and may thereby act as an transcriptional inhibitor. May be involved in the regulation of neurogenesis in the hippocampus. May play a role in synaptic modifications in nucleus accumbens medium spiny neurons and thereby play a role in adaptive and pathological reward-dependent learning, including maladaptive responses involved in drug addiction. Seems to be more stably expressed with a half-life of ~9.5 hours in cell culture as compared to 1.5 hours half-life of isoform 1. This is Protein FosB (FOSB) from Homo sapiens (Human).